Consider the following 175-residue polypeptide: ATP synthase subunit b (175 aa).

A helical membrane pass occupies residues 13–33; sequence LLSPNPGLIFWTAVTFLLLLL.

It belongs to the ATPase B chain family. In terms of assembly, F-type ATPases have 2 components, F(1) - the catalytic core - and F(0) - the membrane proton channel. F(1) has five subunits: alpha(3), beta(3), gamma(1), delta(1), epsilon(1). F(0) has four main subunits: a(1), b(2) and c(10-14). The alpha and beta chains form an alternating ring which encloses part of the gamma chain. F(1) is attached to F(0) by a central stalk formed by the gamma and epsilon chains, while a peripheral stalk is formed by the delta and b chains.

The protein localises to the cell inner membrane. In terms of biological role, f(1)F(0) ATP synthase produces ATP from ADP in the presence of a proton or sodium gradient. F-type ATPases consist of two structural domains, F(1) containing the extramembraneous catalytic core and F(0) containing the membrane proton channel, linked together by a central stalk and a peripheral stalk. During catalysis, ATP synthesis in the catalytic domain of F(1) is coupled via a rotary mechanism of the central stalk subunits to proton translocation. Functionally, component of the F(0) channel, it forms part of the peripheral stalk, linking F(1) to F(0). The protein is ATP synthase subunit b of Chloroherpeton thalassium (strain ATCC 35110 / GB-78).